The following is a 178-amino-acid chain: CDP-diacylglycerol--glycerol-3-phosphate 3-phosphatidyltransferase (178 aa).

Transmembrane regions (helical) follow at residues 5 to 25 (PNYL…LFYI), 32 to 52 (KLGA…GYIA), 61 to 81 (FGKM…TIML), and 145 to 165 (IIYL…LTII).

The protein belongs to the CDP-alcohol phosphatidyltransferase class-I family.

It localises to the cell membrane. It catalyses the reaction a CDP-1,2-diacyl-sn-glycerol + sn-glycerol 3-phosphate = a 1,2-diacyl-sn-glycero-3-phospho-(1'-sn-glycero-3'-phosphate) + CMP + H(+). It participates in phospholipid metabolism; phosphatidylglycerol biosynthesis; phosphatidylglycerol from CDP-diacylglycerol: step 1/2. Functionally, this protein catalyzes the committed step to the synthesis of the acidic phospholipids. This is CDP-diacylglycerol--glycerol-3-phosphate 3-phosphatidyltransferase (pgsA) from Rickettsia typhi (strain ATCC VR-144 / Wilmington).